We begin with the raw amino-acid sequence, 154 residues long: Large ribosomal subunit protein uL30 (154 aa).

Positions 114 to 139 (PTLRLHPPRGGHDGIKHPTKEGGQLG) are disordered. Residues 123 to 133 (GGHDGIKHPTK) show a composition bias toward basic and acidic residues.

Belongs to the universal ribosomal protein uL30 family. In terms of assembly, part of the 50S ribosomal subunit.

The sequence is that of Large ribosomal subunit protein uL30 from Natronomonas pharaonis (strain ATCC 35678 / DSM 2160 / CIP 103997 / JCM 8858 / NBRC 14720 / NCIMB 2260 / Gabara) (Halobacterium pharaonis).